The primary structure comprises 840 residues: Lethal(3)malignant brain tumor-like protein 1 (840 aa).

Serine 117 carries the post-translational modification Phosphoserine. The tract at residues 127 to 269 (EYEDGGAPAG…WSSSQPATGE (143 aa)) is disordered. A compositionally biased stretch (acidic residues) spans 156 to 165 (PNQDPPEDDS). The segment covering 200 to 210 (VENSSGSTSAS) has biased composition (polar residues). A compositionally biased stretch (basic and acidic residues) spans 236-247 (AMEKQEEGKDPE). The segment covering 250–266 (PTASTPESEEWSSSQPA) has biased composition (polar residues). 3 MBT repeats span residues 274–374 (WSWE…LQPP), 382–481 (FSWS…LTPP), and 490–585 (FCWE…LQPP). The interaction with monomethylated and dimethylated peptides stretch occupies residues 447 to 454 (FDNWDDTY). Residues 580–605 (HPLQPPLGPREPSSASPGGCPPLSYR) form a disordered region. A CCHHC-type zinc finger spans residues 613-656 (SKYSFHHRKCPTPGCDGSGHVTGKFTAHHCLSGCPLAERNQSRL). Cysteine 622, cysteine 627, histidine 640, and cysteine 646 together coordinate Zn(2+). The interval 657-697 (KAELSDSEASARKKNLSGFSPRKKPRHHGRIGRPPKYRKIP) is disordered. Over residues 677–695 (PRKKPRHHGRIGRPPKYRK) the composition is skewed to basic residues.

Homodimer. Interacts with RB1/RB (when monomethylated at 'Lys-860'). Interacts with p53/TP53 (when monomethylated at 'Lys-382'). Interacts with CBX3, ETV6, KMT5A and VCP/p97. Ubiquitinated in a VCP/p97-dependent way following DNA damage, leading to its removal from DNA damage sites, promoting accessibility of H4K20me2 mark for DNA repair protein TP53BP1, which is then recruited to DNA damage sites. Widely expressed. Expression is reduced in colorectal cancer cell line SW480 and promyelocytic leukemia cell line HL-60.

The protein localises to the nucleus. In terms of biological role, polycomb group (PcG) protein that specifically recognizes and binds mono- and dimethyllysine residues on target proteins, thereby acting as a 'reader' of a network of post-translational modifications. PcG proteins maintain the transcriptionally repressive state of genes: acts as a chromatin compaction factor by recognizing and binding mono- and dimethylated histone H1b/H1-4 at 'Lys-26' (H1bK26me1 and H1bK26me2) and histone H4 at 'Lys-20' (H4K20me1 and H4K20me2), leading to condense chromatin and repress transcription. Recognizes and binds p53/TP53 monomethylated at 'Lys-382', leading to repress p53/TP53-target genes. Also recognizes and binds RB1/RB monomethylated at 'Lys-860'. Participates in the ETV6-mediated repression. Probably plays a role in cell proliferation. Overexpression induces multinucleated cells, suggesting that it is required to accomplish normal mitosis. This chain is Lethal(3)malignant brain tumor-like protein 1 (L3MBTL1), found in Homo sapiens (Human).